A 64-amino-acid chain; its full sequence is Protein DsrB (64 aa).

The protein belongs to the DsrB family.

The polypeptide is Protein DsrB (Salmonella arizonae (strain ATCC BAA-731 / CDC346-86 / RSK2980)).